The primary structure comprises 782 residues: uncharacterized protein (782 aa).

Disordered stretches follow at residues 1-127 (MTTT…SAMK), 205-234 (NAAA…SYNP), and 308-355 (PYNF…SYLR). Positions 24 to 54 (KPQEEPTMKDKALLFEKQRQEKKMKHTEAKM) are enriched in basic and acidic residues. The span at 82 to 118 (KNVNNATSTNNATSTKNNTKNTPKNTPKNIPKNTTAK) shows a compositional bias: low complexity. Positions 312–324 (ARNNHGSDVSSAM) are enriched in polar residues. Residues 326–336 (NARRQASETRR) are compositionally biased toward basic and acidic residues. Positions 337–346 (SNLSSYNDRN) are enriched in polar residues. A coiled-coil region spans residues 361 to 628 (MEKIRTEVDK…ERLRERLREL (268 aa)). Positions 629–668 (GSRDRSYNRSSRDRSHDRLYERSPRSRDRSSRDRSRDRYS) are enriched in basic and acidic residues. Positions 629–689 (GSRDRSYNRS…SDSVKDYSVG (61 aa)) are disordered. Over residues 669–678 (RSRSRSRYRR) the composition is skewed to basic residues. Positions 679–689 (RSDSVKDYSVG) are enriched in basic and acidic residues.

This is an uncharacterized protein from Yarrowia lipolytica (strain CLIB 122 / E 150) (Yeast).